A 417-amino-acid chain; its full sequence is NADH-quinone oxidoreductase subunit D (417 aa).

This sequence belongs to the complex I 49 kDa subunit family. In terms of assembly, NDH-1 is composed of 14 different subunits. Subunits NuoB, C, D, E, F, and G constitute the peripheral sector of the complex.

Its subcellular location is the cell inner membrane. The catalysed reaction is a quinone + NADH + 5 H(+)(in) = a quinol + NAD(+) + 4 H(+)(out). Functionally, NDH-1 shuttles electrons from NADH, via FMN and iron-sulfur (Fe-S) centers, to quinones in the respiratory chain. The immediate electron acceptor for the enzyme in this species is believed to be ubiquinone. Couples the redox reaction to proton translocation (for every two electrons transferred, four hydrogen ions are translocated across the cytoplasmic membrane), and thus conserves the redox energy in a proton gradient. In Burkholderia lata (strain ATCC 17760 / DSM 23089 / LMG 22485 / NCIMB 9086 / R18194 / 383), this protein is NADH-quinone oxidoreductase subunit D.